A 204-amino-acid chain; its full sequence is Large ribosomal subunit protein uL3 (204 aa).

This sequence belongs to the universal ribosomal protein uL3 family. In terms of assembly, part of the 50S ribosomal subunit. Forms a cluster with proteins L14 and L19.

Its function is as follows. One of the primary rRNA binding proteins, it binds directly near the 3'-end of the 23S rRNA, where it nucleates assembly of the 50S subunit. The sequence is that of Large ribosomal subunit protein uL3 from Azobacteroides pseudotrichonymphae genomovar. CFP2.